A 158-amino-acid polypeptide reads, in one-letter code: Ribosome maturation factor RimP (158 aa).

The protein belongs to the RimP family.

Its subcellular location is the cytoplasm. Required for maturation of 30S ribosomal subunits. This chain is Ribosome maturation factor RimP, found in Lactobacillus delbrueckii subsp. bulgaricus (strain ATCC 11842 / DSM 20081 / BCRC 10696 / JCM 1002 / NBRC 13953 / NCIMB 11778 / NCTC 12712 / WDCM 00102 / Lb 14).